The primary structure comprises 125 residues: Small ribosomal subunit protein uS13 (125 aa).

Positions 97–125 are disordered; sequence PLRGQRTKTNARTRKGKRKTVANKKMASK.

This sequence belongs to the universal ribosomal protein uS13 family. Part of the 30S ribosomal subunit. Forms a loose heterodimer with protein S19. Forms two bridges to the 50S subunit in the 70S ribosome.

Functionally, located at the top of the head of the 30S subunit, it contacts several helices of the 16S rRNA. In the 70S ribosome it contacts the 23S rRNA (bridge B1a) and protein L5 of the 50S subunit (bridge B1b), connecting the 2 subunits; these bridges are implicated in subunit movement. Contacts the tRNAs in the A and P-sites. The sequence is that of Small ribosomal subunit protein uS13 from Borrelia hermsii (strain HS1 / DAH).